A 161-amino-acid polypeptide reads, in one-letter code: 2-C-methyl-D-erythritol 2,4-cyclodiphosphate synthase (161 aa).

A divalent metal cation is bound by residues Asp-10 and His-12. Residues 10-12 (DVH) and 36-37 (HS) contribute to the 4-CDP-2-C-methyl-D-erythritol 2-phosphate site. Residue His-44 coordinates a divalent metal cation. 4-CDP-2-C-methyl-D-erythritol 2-phosphate contacts are provided by residues 58–60 (DIG), 63–67 (FSDTD), and Arg-144.

Belongs to the IspF family. As to quaternary structure, homotrimer. A divalent metal cation serves as cofactor.

The enzyme catalyses 4-CDP-2-C-methyl-D-erythritol 2-phosphate = 2-C-methyl-D-erythritol 2,4-cyclic diphosphate + CMP. It functions in the pathway isoprenoid biosynthesis; isopentenyl diphosphate biosynthesis via DXP pathway; isopentenyl diphosphate from 1-deoxy-D-xylulose 5-phosphate: step 4/6. In terms of biological role, involved in the biosynthesis of isopentenyl diphosphate (IPP) and dimethylallyl diphosphate (DMAPP), two major building blocks of isoprenoid compounds. Catalyzes the conversion of 4-diphosphocytidyl-2-C-methyl-D-erythritol 2-phosphate (CDP-ME2P) to 2-C-methyl-D-erythritol 2,4-cyclodiphosphate (ME-CPP) with a corresponding release of cytidine 5-monophosphate (CMP). The protein is 2-C-methyl-D-erythritol 2,4-cyclodiphosphate synthase of Burkholderia cenocepacia (strain HI2424).